Reading from the N-terminus, the 173-residue chain is Probable capsid assembly scaffolding protein (173 aa).

Positions 1–30 are disordered; that stretch reads MSDTATTEGTPAGDPTPVVTDKPLEPTPKT. Positions 36–56 form a coiled coil; it reads VKELRQEAAAARVAKKDAVEA.

Belongs to the L5likevirus scaffolding protein family.

In terms of biological role, scaffolding protein involved in the icosahedric procapsid assembly. Coassembles with the capsid proteins to form the procapsid, in which the scaffolding protein is found within the external shell of icosahedrally arranged capsid protein subunits. The chain is Probable capsid assembly scaffolding protein (16) from Mycobacterium (Mycobacteriophage D29).